Reading from the N-terminus, the 426-residue chain is MAKLLQPSPKFLPEEWHIANKNQYHRAEAQRSRSERLVAESQRLVDEIEKTTRKSQSDVNKKLEQRLEEVRFWKKELDDKLEQLVCTTEDLLTYQTRLQNALESLKEPLHITQMCLEYRDKRIGIDLVHDEVEQELLKEAEVIHGVMALLTRTMDEVTEQIRLNRSAKYNLEKDLKDKFVALTIDDVCFSLNNNSPGIYYSDSVVRVEPHSVSLEDWLDFSNTNVEKANRQRNNSLALKALVDRILSQTADDLRRQCDMVDTAFQMGLKETKAARDQLAAHLAKVMEEIACQEKNMTVLEKAILDQEGPAKVAHTRLETRTRRPNVELCRDVAQYRLVKEVGEIAQNVGRLKEALAQAQVELKGLNRRQLALQEEVQVKENTIYIDRVLCTHMRKSNPLRDGGDQGQWARACAPTPSAEDGTSHTD.

3 coiled-coil regions span residues 21 to 84 (KNQY…LEQL), 268 to 307 (LKET…LDQE), and 339 to 383 (KEVG…ENTI). The interval 396–426 (SNPLRDGGDQGQWARACAPTPSAEDGTSHTD) is disordered.

The protein belongs to the tektin family. Microtubule inner protein component of sperm flagellar doublet microtubules. Post-translationally, ubiquitinated, leading to its degradation. Deubiquitinated by USP16, promoting its stability.

It is found in the cytoplasm. The protein resides in the cytoskeleton. It localises to the cilium axoneme. Its subcellular location is the flagellum axoneme. Its function is as follows. Microtubule inner protein (MIP) part of the dynein-decorated doublet microtubules (DMTs) in cilia and flagellar axoneme. Forms filamentous polymers in the walls of ciliary and flagellar microtubules. This Canis lupus familiaris (Dog) protein is Tektin-1 (TEKT1).